We begin with the raw amino-acid sequence, 181 residues long: Large ribosomal subunit protein uL10 (181 aa).

Belongs to the universal ribosomal protein uL10 family. In terms of assembly, part of the ribosomal stalk of the 50S ribosomal subunit. The N-terminus interacts with L11 and the large rRNA to form the base of the stalk. The C-terminus forms an elongated spine to which L12 dimers bind in a sequential fashion forming a multimeric L10(L12)X complex.

Functionally, forms part of the ribosomal stalk, playing a central role in the interaction of the ribosome with GTP-bound translation factors. The polypeptide is Large ribosomal subunit protein uL10 (Protochlamydia amoebophila (strain UWE25)).